The following is a 399-amino-acid chain: S-adenosylmethionine synthase (399 aa).

Position 17 (His-17) interacts with ATP. Asp-19 is a binding site for Mg(2+). Glu-45 is a K(+) binding site. The L-methionine site is built by Glu-58 and Gln-101. Residues Gln-101–Gln-111 form a flexible loop region. Residues Asp-177–Lys-179, Arg-244–Phe-245, Asp-253, Arg-259–Lys-260, Ala-276, and Lys-280 each bind ATP. Position 253 (Asp-253) interacts with L-methionine. Residue Lys-284 participates in L-methionine binding.

The protein belongs to the AdoMet synthase family. Homotetramer; dimer of dimers. Mg(2+) is required as a cofactor. The cofactor is K(+).

The protein resides in the cytoplasm. The enzyme catalyses L-methionine + ATP + H2O = S-adenosyl-L-methionine + phosphate + diphosphate. Its pathway is amino-acid biosynthesis; S-adenosyl-L-methionine biosynthesis; S-adenosyl-L-methionine from L-methionine: step 1/1. Functionally, catalyzes the formation of S-adenosylmethionine (AdoMet) from methionine and ATP. The overall synthetic reaction is composed of two sequential steps, AdoMet formation and the subsequent tripolyphosphate hydrolysis which occurs prior to release of AdoMet from the enzyme. This is S-adenosylmethionine synthase from Bacillus cereus (strain G9842).